A 384-amino-acid chain; its full sequence is Glutamate 5-kinase (384 aa).

ATP is bound at residue Lys-24. Positions 64, 149, and 161 each coordinate substrate. ATP is bound by residues 181-182 and 223-229; these read TD and TGGMRTK. A PUA domain is found at 288–370; it reads PGAILIDAGA…RDIQTLLGYT (83 aa).

The protein belongs to the glutamate 5-kinase family.

The protein localises to the cytoplasm. It catalyses the reaction L-glutamate + ATP = L-glutamyl 5-phosphate + ADP. Its pathway is amino-acid biosynthesis; L-proline biosynthesis; L-glutamate 5-semialdehyde from L-glutamate: step 1/2. Catalyzes the transfer of a phosphate group to glutamate to form L-glutamate 5-phosphate. The protein is Glutamate 5-kinase of Xylella fastidiosa (strain M23).